The chain runs to 121 residues: uncharacterized protein (121 aa).

The disordered stretch occupies residues 101 to 121 (SIEPTATGSPETRDPDPSAYA). Over residues 111 to 121 (ETRDPDPSAYA) the composition is skewed to basic and acidic residues.

It localises to the mitochondrion. This is an uncharacterized protein from Arabidopsis thaliana (Mouse-ear cress).